The primary structure comprises 237 residues: Ribonuclease PH (237 aa).

Residues Arg86 and 124 to 126 each bind phosphate; that span reads GTR.

It belongs to the RNase PH family. Homohexameric ring arranged as a trimer of dimers.

The catalysed reaction is tRNA(n+1) + phosphate = tRNA(n) + a ribonucleoside 5'-diphosphate. In terms of biological role, phosphorolytic 3'-5' exoribonuclease that plays an important role in tRNA 3'-end maturation. Removes nucleotide residues following the 3'-CCA terminus of tRNAs; can also add nucleotides to the ends of RNA molecules by using nucleoside diphosphates as substrates, but this may not be physiologically important. Probably plays a role in initiation of 16S rRNA degradation (leading to ribosome degradation) during starvation. This chain is Ribonuclease PH, found in Beijerinckia indica subsp. indica (strain ATCC 9039 / DSM 1715 / NCIMB 8712).